A 205-amino-acid polypeptide reads, in one-letter code: High frequency lysogenization protein HflD homolog (205 aa).

Belongs to the HflD family.

Its subcellular location is the cytoplasm. It localises to the cell inner membrane. The sequence is that of High frequency lysogenization protein HflD homolog from Vibrio cholerae serotype O1 (strain ATCC 39541 / Classical Ogawa 395 / O395).